Reading from the N-terminus, the 269-residue chain is 4-hydroxy-tetrahydrodipicolinate reductase (269 aa).

Residues 8 to 13 (GVAGRM), 98 to 100 (GTT), and 122 to 125 (APNM) each bind NAD(+). The Proton donor/acceptor role is filled by H156. H157 lines the (S)-2,3,4,5-tetrahydrodipicolinate pocket. Catalysis depends on K160, which acts as the Proton donor. 166-167 (GT) provides a ligand contact to (S)-2,3,4,5-tetrahydrodipicolinate.

This sequence belongs to the DapB family.

The protein localises to the cytoplasm. The enzyme catalyses (S)-2,3,4,5-tetrahydrodipicolinate + NAD(+) + H2O = (2S,4S)-4-hydroxy-2,3,4,5-tetrahydrodipicolinate + NADH + H(+). It catalyses the reaction (S)-2,3,4,5-tetrahydrodipicolinate + NADP(+) + H2O = (2S,4S)-4-hydroxy-2,3,4,5-tetrahydrodipicolinate + NADPH + H(+). The protein operates within amino-acid biosynthesis; L-lysine biosynthesis via DAP pathway; (S)-tetrahydrodipicolinate from L-aspartate: step 4/4. In terms of biological role, catalyzes the conversion of 4-hydroxy-tetrahydrodipicolinate (HTPA) to tetrahydrodipicolinate. This Chromohalobacter salexigens (strain ATCC BAA-138 / DSM 3043 / CIP 106854 / NCIMB 13768 / 1H11) protein is 4-hydroxy-tetrahydrodipicolinate reductase.